Reading from the N-terminus, the 1016-residue chain is DENN domain-containing protein 1A (1016 aa).

The uDENN domain maps to 13–145 (FEVYVEVAYP…HRLPIPDPGV (133 aa)). The cDENN domain maps to 162-298 (ELPSIPENRN…VISSLKNRLK (137 aa)). The region spanning 300–378 (VSTTTGDGVA…DGRLDLLNSG (79 aa)) is the dDENN domain. The FXDXF motif motif lies at 381–385 (FSDVF). The tract at residues 453 to 565 (DITENGCVSS…GPTPAPPDRA (113 aa)) is disordered. Residue Ser-473 is modified to Phosphoserine. Residues 479 to 489 (QDPRLREDRRP) are compositionally biased toward basic and acidic residues. A compositionally biased stretch (basic residues) spans 500–509 (PRPHVVRRPK). A Phosphothreonine modification is found at Thr-519. Phosphoserine is present on residues Ser-520, Ser-522, Ser-523, Ser-536, Ser-538, and Ser-546. Residues 569–578 (DLLEDVFSSL) carry the Clathrin box motif. Phosphoserine is present on Ser-592. A disordered region spans residues 681 to 737 (LSPSIKEETPIPTPGSITIPRPQGRKTPELGIVPPPPTARPAKLQAAGGPLGDFSSE). At Ser-750 the chain carries Phosphoserine. Omega-N-methylarginine is present on Arg-760. 2 disordered regions span residues 763-783 (PQGPTELLQPPSPAPGAAGTG) and 935-1016 (SARA…ETFE). The span at 954–970 (LLPPRPPQSLQPTPQPS) shows a compositional bias: pro residues. Composition is skewed to basic and acidic residues over residues 977 to 988 (DPFEDLLRKTKQ) and 1007 to 1016 (QLRRQWETFE).

As to quaternary structure, interacts with RAB35. Interacts with clathrin and with the adapter protein complex 2, AP-2. Interacts with ITSN1 and SH3GL2. Interacts (when phosphorylated) with YWHAE. In terms of processing, phosphorylated on serine and/or threonine in an Akt-dependent manner. Phosphorylation probably regulates the guanine nucleotide exchange factor (GEF) activity, possibly by disrupting an intramolecular interaction between the DENN domain and the C-terminus of the protein, thereby relieving the autoinhibition.

The protein localises to the cytoplasmic vesicle. Its subcellular location is the clathrin-coated vesicle membrane. It localises to the presynaptic cell membrane. The guanine nucleotide exchange factor (GEF) activity is autoinhibited. Autoinhibition may be the result of intramolecular interaction between the DENN domain and the C-terminus, which is disrupted upon phosphorylation. Activation is regulated by Akt activation. Its function is as follows. Guanine nucleotide exchange factor (GEF) regulating clathrin-mediated endocytosis through RAB35 activation. Promotes the exchange of GDP to GTP, converting inactive GDP-bound RAB35 into its active GTP-bound form. Regulates clathrin-mediated endocytosis of synaptic vesicles and mediates exit from early endosomes. Binds phosphatidylinositol-phosphates (PtdInsPs), with some preference for PtdIns(3)P. This chain is DENN domain-containing protein 1A (Dennd1a), found in Mus musculus (Mouse).